A 693-amino-acid polypeptide reads, in one-letter code: UvrABC system protein B (693 aa).

Residues 35 to 188 (ERINNGEKDV…DQLLRQFVGI (154 aa)) form the Helicase ATP-binding domain. 48 to 55 (GATGTGKS) contributes to the ATP binding site. Positions 101–124 (YYDYYQPEAYVPQTDTFIEKDSSV) match the Beta-hairpin motif. Positions 438–600 (QIDDLLGEIR…VDPTPLRKRI (163 aa)) constitute a Helicase C-terminal domain. The disordered stretch occupies residues 612-634 (ADTKSLLESAGKGRSRGKAPVPV). Residues 648–683 (VDLIEQLTAQMHSAAGELQFELAARLRDEVGDLKKE) form the UVR domain.

The protein belongs to the UvrB family. Forms a heterotetramer with UvrA during the search for lesions. Interacts with UvrC in an incision complex.

It localises to the cytoplasm. The UvrABC repair system catalyzes the recognition and processing of DNA lesions. A damage recognition complex composed of 2 UvrA and 2 UvrB subunits scans DNA for abnormalities. Upon binding of the UvrA(2)B(2) complex to a putative damaged site, the DNA wraps around one UvrB monomer. DNA wrap is dependent on ATP binding by UvrB and probably causes local melting of the DNA helix, facilitating insertion of UvrB beta-hairpin between the DNA strands. Then UvrB probes one DNA strand for the presence of a lesion. If a lesion is found the UvrA subunits dissociate and the UvrB-DNA preincision complex is formed. This complex is subsequently bound by UvrC and the second UvrB is released. If no lesion is found, the DNA wraps around the other UvrB subunit that will check the other stand for damage. The sequence is that of UvrABC system protein B from Renibacterium salmoninarum (strain ATCC 33209 / DSM 20767 / JCM 11484 / NBRC 15589 / NCIMB 2235).